A 306-amino-acid chain; its full sequence is Aspartate carbamoyltransferase catalytic subunit (306 aa).

Residues arginine 49 and threonine 50 each contribute to the carbamoyl phosphate site. Lysine 77 contacts L-aspartate. Carbamoyl phosphate contacts are provided by arginine 99, histidine 127, and glutamine 130. Positions 160 and 211 each coordinate L-aspartate. Carbamoyl phosphate-binding residues include alanine 250 and proline 251.

The protein belongs to the aspartate/ornithine carbamoyltransferase superfamily. ATCase family. In terms of assembly, heterododecamer (2C3:3R2) of six catalytic PyrB chains organized as two trimers (C3), and six regulatory PyrI chains organized as three dimers (R2).

The catalysed reaction is carbamoyl phosphate + L-aspartate = N-carbamoyl-L-aspartate + phosphate + H(+). It functions in the pathway pyrimidine metabolism; UMP biosynthesis via de novo pathway; (S)-dihydroorotate from bicarbonate: step 2/3. Functionally, catalyzes the condensation of carbamoyl phosphate and aspartate to form carbamoyl aspartate and inorganic phosphate, the committed step in the de novo pyrimidine nucleotide biosynthesis pathway. This Bacillus licheniformis (strain ATCC 14580 / DSM 13 / JCM 2505 / CCUG 7422 / NBRC 12200 / NCIMB 9375 / NCTC 10341 / NRRL NRS-1264 / Gibson 46) protein is Aspartate carbamoyltransferase catalytic subunit.